Consider the following 278-residue polypeptide: Envelope glycoprotein L (278 aa).

The signal sequence occupies residues 1–32; the sequence is MCRRPDCGFSFSPGPVILLWCCLLLSIVSSAA. One can recognise a gL betaherpesvirus-type domain in the interval 43–256; it reads VPAECPELTR…DKYYAGLPPE (214 aa). A disulfide bridge connects residues Cys154 and Cys159.

The protein belongs to the herpesviridae glycoprotein L (gL) family. Betaherpesvirinae gL subfamily. In terms of assembly, interacts with glycoprotein H (gH); this interaction is necessary for the correct processing and cell surface expression of gH. Forms the envelope pentamer complex (PC) composed of gH, gL, UL128, UL130, and UL131A. The pentamer interacts with host NRP2. Forms the envelope trimer complex composed of gH, gL, and gO. The trimer interacts with host PDGFRA. The trimer also interacts with host EPHA2.

The protein localises to the virion membrane. Its subcellular location is the host cell membrane. The protein resides in the host Golgi apparatus. It is found in the host trans-Golgi network. The heterodimer glycoprotein H-glycoprotein L is required for the fusion of viral and plasma membranes leading to virus entry into the host cell. Acts as a functional inhibitor of gH and maintains gH in an inhibited form. Upon binding to host integrins, gL dissociates from gH leading to activation of the viral fusion glycoproteins gB and gH. In human cytomegalovirus, forms two distincts complexes to mediate viral entry, a trimer and a pentamer at the surface of the virion envelope. The gH-gL-gO trimer is required for infection in fibroblasts by interacting with host PDGFRA, and in glioblastoma cells by interacting with host EPHA2. The gH-gL-UL128-UL130-UL131A pentamer is essential for viral entry in epithelial, endothelial and myeloid cells via interaction with host NRP2. The sequence is that of Envelope glycoprotein L from Human cytomegalovirus (strain 119) (HHV-5).